The sequence spans 149 residues: Protein FAM72A (149 aa).

This sequence belongs to the FAM72 family. As to quaternary structure, interacts with UNG. In terms of tissue distribution, expressed at high levels in stomach and also in kidney and, at low levels, in heart (at protein level). In the stomach, highly expressed in foveolar cells, parietal cells and chief cells (at protein level). In kidney, expressed in endothelial cells, mesangial and epithelial cells (parietal and visceral epithelium) around glomerulus (at protein level).

It localises to the cytoplasm. The protein resides in the mitochondrion. In terms of biological role, may play a role in the regulation of cellular reactive oxygen species metabolism. May participate in cell growth regulation. The chain is Protein FAM72A (FAM72A) from Bos taurus (Bovine).